The sequence spans 467 residues: 3-isopropylmalate dehydratase large subunit (467 aa).

Residues C347, C407, and C410 each coordinate [4Fe-4S] cluster.

This sequence belongs to the aconitase/IPM isomerase family. LeuC type 1 subfamily. In terms of assembly, heterodimer of LeuC and LeuD. Requires [4Fe-4S] cluster as cofactor.

The enzyme catalyses (2R,3S)-3-isopropylmalate = (2S)-2-isopropylmalate. Its pathway is amino-acid biosynthesis; L-leucine biosynthesis; L-leucine from 3-methyl-2-oxobutanoate: step 2/4. Catalyzes the isomerization between 2-isopropylmalate and 3-isopropylmalate, via the formation of 2-isopropylmaleate. This is 3-isopropylmalate dehydratase large subunit from Trichormus variabilis (strain ATCC 29413 / PCC 7937) (Anabaena variabilis).